Reading from the N-terminus, the 535-residue chain is Putative subtilisin-like proteinase 2 (535 aa).

Positions M1 to G17 are cleaved as a signal peptide. Positions N221–I475 constitute a Peptidase S8 domain. Active-site charge relay system residues include D255 and H277. C369 and C400 are joined by a disulfide. The active-site Charge relay system is S420. A helical membrane pass occupies residues I489–G509.

Belongs to the peptidase S8 family.

Its subcellular location is the membrane. Functionally, may be involved in the degradation of proteins for nutrient acquisition or possess a regulatory function by proteolytic activation of proproteins. In Encephalitozoon cuniculi (strain GB-M1) (Microsporidian parasite), this protein is Putative subtilisin-like proteinase 2 (SPL2).